A 770-amino-acid polypeptide reads, in one-letter code: Formate acetyltransferase (770 aa).

The PFL domain maps to 5-635; it reads NEMQKLAWAG…KTGNTPDGRR (631 aa). Cysteine 419 serves as the catalytic S-acetylcysteine intermediate. The Cysteine radical intermediate role is filled by cysteine 420. One can recognise a Glycine radical domain in the interval 642–770; it reads PGANPMHGRD…VITRTFTESM (129 aa). A Glycine radical modification is found at glycine 745.

It belongs to the glycyl radical enzyme (GRE) family. PFL subfamily. As to quaternary structure, homodimer.

It localises to the cytoplasm. The catalysed reaction is formate + acetyl-CoA = pyruvate + CoA. The protein operates within fermentation; pyruvate fermentation; formate from pyruvate: step 1/1. In terms of biological role, catalyzes the conversion of pyruvate to formate and acetyl-CoA. The protein is Formate acetyltransferase (pflB) of Haemophilus influenzae (strain ATCC 51907 / DSM 11121 / KW20 / Rd).